The primary structure comprises 624 residues: Alpha-amylase 1 (624 aa).

Residues 1-28 (MLLINFFIAVLGVISLSPIVVARYILRR) form the signal peptide. The CBM21 domain occupies 40–133 (ESVTGSNHVQ…SDTSVTYTTS (94 aa)). C177 and C185 are disulfide-bonded. W230 is a binding site for substrate. N268 contacts Ca(2+). H269 contributes to the substrate binding site. A disulfide bond links C297 and C311. The N-linked (GlcNAc...) asparagine glycan is linked to N304. Ca(2+) is bound by residues E309 and D322. The N-linked (GlcNAc...) asparagine glycan is linked to N344. R351 contacts substrate. Positions 353, 357, and 377 each coordinate Ca(2+). Residue D353 is the Nucleophile of the active site. Residue 356–357 (KH) coordinates substrate. The active-site Proton donor is the E377. G381 contributes to the substrate binding site. C387 and C430 are disulfide-bonded. Substrate-binding residues include D444 and R491. C587 and C622 form a disulfide bridge.

The protein belongs to the glycosyl hydrolase 13 family. Requires Ca(2+) as cofactor.

It is found in the secreted. The catalysed reaction is Endohydrolysis of (1-&gt;4)-alpha-D-glucosidic linkages in polysaccharides containing three or more (1-&gt;4)-alpha-linked D-glucose units.. The polypeptide is Alpha-amylase 1 (LKA1) (Lipomyces kononenkoae (Yeast)).